The following is a 177-amino-acid chain: ATP synthase subunit delta (177 aa).

It belongs to the ATPase delta chain family. F-type ATPases have 2 components, F(1) - the catalytic core - and F(0) - the membrane proton channel. F(1) has five subunits: alpha(3), beta(3), gamma(1), delta(1), epsilon(1). F(0) has three main subunits: a(1), b(2) and c(10-14). The alpha and beta chains form an alternating ring which encloses part of the gamma chain. F(1) is attached to F(0) by a central stalk formed by the gamma and epsilon chains, while a peripheral stalk is formed by the delta and b chains.

It localises to the cell membrane. F(1)F(0) ATP synthase produces ATP from ADP in the presence of a proton or sodium gradient. F-type ATPases consist of two structural domains, F(1) containing the extramembraneous catalytic core and F(0) containing the membrane proton channel, linked together by a central stalk and a peripheral stalk. During catalysis, ATP synthesis in the catalytic domain of F(1) is coupled via a rotary mechanism of the central stalk subunits to proton translocation. Its function is as follows. This protein is part of the stalk that links CF(0) to CF(1). It either transmits conformational changes from CF(0) to CF(1) or is implicated in proton conduction. The chain is ATP synthase subunit delta from Buchnera aphidicola subsp. Acyrthosiphon pisum (strain 5A).